The primary structure comprises 260 residues: Phosphatidate cytidylyltransferase (260 aa).

The next 7 membrane-spanning stretches (helical) occupy residues 9 to 29 (IIALIVFLPVLLKGGLILMLF), 46 to 66 (MIKFLSIPGIISALGILIIML), 70 to 90 (AGSWVNDLQLKSLIAMSFILL), 102 to 122 (FMDAAFCLMSIAYVGIGFMYL), 130 to 150 (LHYILFAFLVVWLTDTGAYIF), 172 to 192 (FVGGLICSLIVPLVMMIFVDF), and 196 to 216 (LWLLLIITIILSMFGQLGDLV).

It belongs to the CDS family.

Its subcellular location is the cell membrane. The enzyme catalyses a 1,2-diacyl-sn-glycero-3-phosphate + CTP + H(+) = a CDP-1,2-diacyl-sn-glycerol + diphosphate. It functions in the pathway phospholipid metabolism; CDP-diacylglycerol biosynthesis; CDP-diacylglycerol from sn-glycerol 3-phosphate: step 3/3. The polypeptide is Phosphatidate cytidylyltransferase (cdsA) (Staphylococcus saprophyticus subsp. saprophyticus (strain ATCC 15305 / DSM 20229 / NCIMB 8711 / NCTC 7292 / S-41)).